The primary structure comprises 269 residues: Staphylococcal secretory antigen ssaA2 (269 aa).

A signal peptide spans 1–27; sequence MKKIATATIATAGFATIAIASGNQAHA. 7 repeat units span residues 83–85, 88–90, 91–93, 97–99, 103–105, 106–108, and 115–117. The tract at residues 83–115 is 7 X 3 AA repeats of Y-[NS]-N; the sequence is YNNYNYNNYNNGYSYNNYSRYNNYSNNNQSYNY. In terms of domain architecture, Peptidase C51 spans 148-269; that stretch reads MAPSSNGRSI…SQAAGYNFIH (122 aa).

The protein resides in the secreted. Functionally, not known; immunogenic protein. The polypeptide is Staphylococcal secretory antigen ssaA2 (ssaA2) (Staphylococcus aureus (strain MSSA476)).